The chain runs to 234 residues: Large ribosomal subunit protein bL25 (234 aa).

The interval 1–24 (MATVMELKATARPKSGKGAARAER) is disordered.

It belongs to the bacterial ribosomal protein bL25 family. CTC subfamily. Part of the 50S ribosomal subunit; part of the 5S rRNA/L5/L18/L25 subcomplex. Contacts the 5S rRNA. Binds to the 5S rRNA independently of L5 and L18.

In terms of biological role, this is one of the proteins that binds to the 5S RNA in the ribosome where it forms part of the central protuberance. The polypeptide is Large ribosomal subunit protein bL25 (Rhodopseudomonas palustris (strain BisB5)).